The chain runs to 57 residues: Large ribosomal subunit protein eL20 (57 aa).

This sequence belongs to the eukaryotic ribosomal protein eL20 family. In terms of assembly, part of the 50S ribosomal subunit. Binds 23S rRNA.

In Archaeoglobus fulgidus (strain ATCC 49558 / DSM 4304 / JCM 9628 / NBRC 100126 / VC-16), this protein is Large ribosomal subunit protein eL20.